The primary structure comprises 580 residues: Malto-oligosyltrehalose trehalohydrolase (580 aa).

Residues 56-88 (LPDPRSARQPDGVHARSQRWEPPGQFGAARTDT) form a disordered region. Positions 60-69 (RSARQPDGVH) are enriched in basic and acidic residues. 245 to 250 (RLDAVH) contacts substrate. The active-site Nucleophile is Asp247. Glu284 serves as the catalytic Proton donor. Residues 309 to 313 (DDIHH) and 379 to 384 (HDQVGN) contribute to the substrate site.

Belongs to the glycosyl hydrolase 13 family.

The protein localises to the cytoplasm. The enzyme catalyses hydrolysis of (1-&gt;4)-alpha-D-glucosidic linkage in 4-alpha-D-[(1-&gt;4)-alpha-D-glucanosyl]n trehalose to yield trehalose and (1-&gt;4)-alpha-D-glucan.. It functions in the pathway glycan biosynthesis; trehalose biosynthesis. Functionally, is involved in the biosynthesis of trehalose but not in that of capsular glucan and glycogen. The chain is Malto-oligosyltrehalose trehalohydrolase (treZ) from Mycobacterium tuberculosis (strain CDC 1551 / Oshkosh).